We begin with the raw amino-acid sequence, 459 residues long: ATP-dependent protease ATPase subunit HslU (459 aa).

ATP-binding positions include Val-18, 60–65 (GVGKTE), Asp-272, Glu-337, and Arg-409.

This sequence belongs to the ClpX chaperone family. HslU subfamily. As to quaternary structure, a double ring-shaped homohexamer of HslV is capped on each side by a ring-shaped HslU homohexamer. The assembly of the HslU/HslV complex is dependent on binding of ATP.

The protein localises to the cytoplasm. Its function is as follows. ATPase subunit of a proteasome-like degradation complex; this subunit has chaperone activity. The binding of ATP and its subsequent hydrolysis by HslU are essential for unfolding of protein substrates subsequently hydrolyzed by HslV. HslU recognizes the N-terminal part of its protein substrates and unfolds these before they are guided to HslV for hydrolysis. This chain is ATP-dependent protease ATPase subunit HslU, found in Thermoanaerobacter pseudethanolicus (strain ATCC 33223 / 39E) (Clostridium thermohydrosulfuricum).